The following is a 200-amino-acid chain: Ribonuclease HII (200 aa).

Residues 6–200 (ESIAGVDEVG…KLFAVHGSLT (195 aa)) enclose the RNase H type-2 domain. 3 residues coordinate a divalent metal cation: D12, E13, and D108.

It belongs to the RNase HII family. Requires Mn(2+) as cofactor. The cofactor is Mg(2+).

It localises to the cytoplasm. It catalyses the reaction Endonucleolytic cleavage to 5'-phosphomonoester.. Endonuclease that specifically degrades the RNA of RNA-DNA hybrids. The polypeptide is Ribonuclease HII (Prochlorococcus marinus (strain MIT 9303)).